The sequence spans 109 residues: Histidine-rich carboxyl terminus protein 1 (109 aa).

Residues 13–33 (WITGTALAFLMLLWLMALCLF) traverse the membrane as a helical segment. Positions 77–109 (TSVGVHHHHHHSPHRLHHHKHHHRHHHAHGARR) are disordered. The span at 81-109 (VHHHHHHSPHRLHHHKHHHRHHHAHGARR) shows a compositional bias: basic residues.

The protein localises to the membrane. This chain is Histidine-rich carboxyl terminus protein 1 (Hrct1), found in Mus musculus (Mouse).